Consider the following 507-residue polypeptide: RNA-splicing ligase RtcB homolog (507 aa).

D121, C124, H229, H261, and H355 together coordinate Mn(2+). 228–232 serves as a coordination point for GMP; sequence NHYAE. GMP-binding positions include 355–356, 404–407, S411, 430–433, and K506; these read HN, GGTM, and HGAG. H430 serves as the catalytic GMP-histidine intermediate.

Belongs to the RtcB family. In terms of assembly, catalytic component of the tRNA-splicing ligase complex. The cofactor is Mn(2+).

The catalysed reaction is a 3'-end 3'-phospho-ribonucleotide-RNA + a 5'-end dephospho-ribonucleoside-RNA + GTP = a ribonucleotidyl-ribonucleotide-RNA + GMP + diphosphate. It carries out the reaction a 3'-end 2',3'-cyclophospho-ribonucleotide-RNA + a 5'-end dephospho-ribonucleoside-RNA + GTP + H2O = a ribonucleotidyl-ribonucleotide-RNA + GMP + diphosphate + H(+). Functionally, catalytic subunit of the tRNA-splicing ligase complex that acts by directly joining spliced tRNA halves to mature-sized tRNAs by incorporating the precursor-derived splice junction phosphate into the mature tRNA as a canonical 3',5'-phosphodiester. May act as an RNA ligase with broad substrate specificity, and may function toward other RNAs. The polypeptide is RNA-splicing ligase RtcB homolog (Branchiostoma floridae (Florida lancelet)).